A 412-amino-acid polypeptide reads, in one-letter code: Zinc finger protein 260 (412 aa).

13 consecutive C2H2-type zinc fingers follow at residues 27 to 49 (YECN…KKMH), 55 to 77 (HECT…LRSH), 83 to 105 (YKCN…QKHH), 136 to 158 (YACK…EKIH), 164 to 186 (FECN…QNIH), 192 to 214 (FKCS…QRIH), 220 to 242 (YECK…QRSH), 248 to 270 (YTCK…EKIH), 276 to 298 (YKCN…HNIH), 304 to 326 (YECN…VRIH), 332 to 354 (YECK…MRSH), 360 to 382 (YGCN…MRIH), and 388 to 412 (YQCS…IHTH).

The protein belongs to the krueppel C2H2-type zinc-finger protein family. Binds DNA. Interacts with GATA4.

The protein resides in the nucleus. Its function is as follows. Transcription factor that acts as a cardiac regulator and an effector of alpha1-adrenergic signaling. Binds to PE response elements (PERE) present in the promoter of genes such as ANF/NPPA and acts as a direct transcriptional activator of NPPA. Also acts as a cofactor with GATA4, a key cardiac regulator. The chain is Zinc finger protein 260 (ZNF260) from Homo sapiens (Human).